Consider the following 74-residue polypeptide: U3-agatoxin-Ao1d (74 aa).

The first 20 residues, 1–20 (MKAAISLLLLSALLFVVIEA), serve as a signal peptide directing secretion. Positions 21–34 (ITYEEGKELFQGER) are excised as a propeptide. Intrachain disulfides connect C37/C53, C44/C58, C52/C68, and C60/C66. The residue at position 72 (S72) is a Serine amide.

Belongs to the neurotoxin 07 (Beta/delta-agtx) family. 02 (aga-3) subfamily. In terms of tissue distribution, expressed by the venom gland.

Its subcellular location is the secreted. In terms of biological role, insecticidal neurotoxin that induces an irreversible spastic paralysis when injected into insects. Modifies presynaptic voltage-gated sodium channels (Nav), causing them to open at the normal resting potential of the nerve. This leads to spontaneous release of neurotransmitter and repetitive action potentials in motor neurons. The sequence is that of U3-agatoxin-Ao1d from Agelena orientalis (Funnel-web spider).